The following is a 157-amino-acid chain: Small ribosomal subunit protein uS7 (157 aa).

It belongs to the universal ribosomal protein uS7 family. Part of the 30S ribosomal subunit. Contacts proteins S9 and S11.

In terms of biological role, one of the primary rRNA binding proteins, it binds directly to 16S rRNA where it nucleates assembly of the head domain of the 30S subunit. Is located at the subunit interface close to the decoding center, probably blocks exit of the E-site tRNA. This is Small ribosomal subunit protein uS7 from Borreliella burgdorferi (strain ATCC 35210 / DSM 4680 / CIP 102532 / B31) (Borrelia burgdorferi).